Here is a 177-residue protein sequence, read N- to C-terminus: Thymidine kinase (177 aa).

Position 11–18 (11–18 (GPMFSGKS)) interacts with ATP. Catalysis depends on E83, which acts as the Proton acceptor. F113 lines the substrate pocket. C138 and C141 together coordinate Zn(2+). 157-161 (IELIG) is a binding site for substrate. Residues C170 and C173 each contribute to the Zn(2+) site.

The protein belongs to the thymidine kinase family.

The catalysed reaction is thymidine + ATP = dTMP + ADP + H(+). The sequence is that of Thymidine kinase (TK) from Sheeppox virus (strain KS-1) (SPPV).